We begin with the raw amino-acid sequence, 280 residues long: 4-diphosphocytidyl-2-C-methyl-D-erythritol kinase (280 aa).

Residue lysine 8 is part of the active site. 91 to 101 (PVSAGLAGGST) serves as a coordination point for ATP. Aspartate 133 is an active-site residue.

Belongs to the GHMP kinase family. IspE subfamily.

The enzyme catalyses 4-CDP-2-C-methyl-D-erythritol + ATP = 4-CDP-2-C-methyl-D-erythritol 2-phosphate + ADP + H(+). It participates in isoprenoid biosynthesis; isopentenyl diphosphate biosynthesis via DXP pathway; isopentenyl diphosphate from 1-deoxy-D-xylulose 5-phosphate: step 3/6. In terms of biological role, catalyzes the phosphorylation of the position 2 hydroxy group of 4-diphosphocytidyl-2C-methyl-D-erythritol. This is 4-diphosphocytidyl-2-C-methyl-D-erythritol kinase from Clostridium botulinum (strain Eklund 17B / Type B).